The sequence spans 518 residues: MIPDVSQALAWLEKHPQALQGIQRGLERETLRVNADGTLATTGHPPALGSALTHKWITTDFAEALLEFITPVDGDIEHMLTFMRDVHRYTARQLGDERMWPLSMPCYIAPGQDIELAQYGTSNVGRLKTLYREGLKNRYGALMQTISGVHYNFSLPMAFWQAKCGVEDAESGKEAISAGYFRSIRNYYRFGWVIPYLFGASPAICSSFLQGKPTTLPFEETGNGMYYLPYATSLRLSDLGYTNKSQSNLGITFNDLHEYVAGLKRAIKTPSEEYAKIGLQKDGKYLQINSNILQIENELYAPIRPKRVTRRGETPSDALLRGGIEYIEVRSLDINPFSPIGVDAQQVRFLDLFMVWCALADAPEMSSDELLCTRTNWNRVILEGRKPGLTLGIGCESAQFPLAQVGKDLFRDLRRVAQTLDSIHGGQAYQQVCDELLACFDDPELTFSARILRSMIEEGIGGTGRALADRYRTQLREEPLEILSEDDFIAERDASVARQKKVEAEDSEPFEALLARHA.

This sequence belongs to the glutamate--cysteine ligase type 1 family. Type 1 subfamily.

It catalyses the reaction L-cysteine + L-glutamate + ATP = gamma-L-glutamyl-L-cysteine + ADP + phosphate + H(+). It participates in sulfur metabolism; glutathione biosynthesis; glutathione from L-cysteine and L-glutamate: step 1/2. The protein is Glutamate--cysteine ligase of Klebsiella pneumoniae subsp. pneumoniae (strain ATCC 700721 / MGH 78578).